Reading from the N-terminus, the 125-residue chain is RxLR effector protein Avh6 (125 aa).

A signal peptide spans 1–25 (MRLSSTTFVVLAAVLLASGTAVSKA). The RxLR-dEER motif lies at 48–70 (RFLRSHHTEDGEAKLSNYDNEER).

This sequence belongs to the RxLR effector family.

It localises to the secreted. The protein resides in the host cell. Functionally, effector that suppresses plant defense responses during the early stages of pathogen infection. Suppresses cell death induced by effectors and PAMPs in plant hosts. Triggers a hypersensitive response (HR) in the presence of Rps1d. Suppresses BAX-induced cell death and enhan,ced P.capsici infection in Nicotiana benthamiana. Also suppresses effector-triggered immunity induction by associating with Avr1b and Rps1b, suggesting a role in suppressing plant immunity. This Phytophthora sojae (strain P6497) (Soybean stem and root rot agent) protein is RxLR effector protein Avh6.